The sequence spans 245 residues: Flavin-dependent thymidylate synthase (245 aa).

In terms of domain architecture, ThyX spans 6–220 (PRVELLAHTP…PELFAHAGAK (215 aa)). Residues serine 65, 89 to 91 (RHR), and glutamine 97 contribute to the FAD site. Residues 86 to 89 (QLVR), 97 to 101 (QQSQR), and arginine 159 contribute to the dUMP site. The ThyX motif motif lies at 89 to 99 (RHRIASFSQQS). Residues 175–177 (NCR) and histidine 181 contribute to the FAD site. Residue arginine 186 coordinates dUMP. The active-site Involved in ionization of N3 of dUMP, leading to its activation is arginine 186.

Belongs to the thymidylate synthase ThyX family. Homotetramer. FAD serves as cofactor.

It carries out the reaction dUMP + (6R)-5,10-methylene-5,6,7,8-tetrahydrofolate + NADPH + H(+) = dTMP + (6S)-5,6,7,8-tetrahydrofolate + NADP(+). It functions in the pathway pyrimidine metabolism; dTTP biosynthesis. In terms of biological role, catalyzes the reductive methylation of 2'-deoxyuridine-5'-monophosphate (dUMP) to 2'-deoxythymidine-5'-monophosphate (dTMP) while utilizing 5,10-methylenetetrahydrofolate (mTHF) as the methyl donor, and NADPH and FADH(2) as the reductant. The chain is Flavin-dependent thymidylate synthase from Nitratidesulfovibrio vulgaris (strain ATCC 29579 / DSM 644 / CCUG 34227 / NCIMB 8303 / VKM B-1760 / Hildenborough) (Desulfovibrio vulgaris).